The chain runs to 227 residues: uncharacterized protein (227 aa).

It belongs to the flavoredoxin family. The cofactor is FMN.

This is an uncharacterized protein from Deinococcus radiodurans (strain ATCC 13939 / DSM 20539 / JCM 16871 / CCUG 27074 / LMG 4051 / NBRC 15346 / NCIMB 9279 / VKM B-1422 / R1).